The following is a 137-amino-acid chain: Proofreading thioesterase EntH (137 aa).

Glu-63 functions as the Nucleophile or proton acceptor in the catalytic mechanism.

It belongs to the thioesterase PaaI family. Homotetramer. Dimer of dimers. Interacts specifically with the aryl carrier protein (ArCP) domain of EntB.

It localises to the cytoplasm. It participates in siderophore biosynthesis; enterobactin biosynthesis. In terms of biological role, required for optimal enterobactin synthesis. Acts as a proofreading enzyme that prevents EntB misacylation by hydrolyzing the thioester bound existing between EntB and wrongly charged molecules. This Escherichia coli O157:H7 (strain EC4115 / EHEC) protein is Proofreading thioesterase EntH.